A 461-amino-acid polypeptide reads, in one-letter code: Transforming growth factor beta-1-induced transcript 1 protein (461 aa).

At Met-1 the chain carries N-acetylmethionine. Residues 1 to 86 form a disordered region; the sequence is MEDLDALLSD…PPFSSSSGVL (86 aa). Residues 1-200 form a transcription activation region; sequence MEDLDALLSD…GCPSPPGQTN (200 aa). The tract at residues 1-240 is interaction with PTK2B/PYK2; sequence MEDLDALLSD…CNKPIAGQVV (240 aa). The LD motif 1 motif lies at 3 to 15; it reads DLDALLSDLETTT. Thr-33 bears the Phosphothreonine mark. Tyr-38 carries the post-translational modification Phosphotyrosine. Over residues 41 to 52 the composition is skewed to polar residues; the sequence is QPQTGSGESSGA. Position 60 is a phosphotyrosine; by FAK2 and FYN (Tyr-60). Ser-68 carries the post-translational modification Phosphoserine. The segment covering 69–83 has biased composition (low complexity); it reads PKSVAPVAPPFSSSS. Residues 83 to 136 form an interaction with PTK2/FAK1 region; the sequence is SGVLGNGLCELDRLLQELNATQFNITDEIMSQFPSSKMAEGEGKEDQSEDKSIT. Positions 92–104 match the LD motif 2 motif; that stretch reads ELDRLLQELNATQ. The disordered stretch occupies residues 116-154; sequence PSSKMAEGEGKEDQSEDKSITTVPSSTFPAPSKPSATSA. Residues 121–134 are compositionally biased toward basic and acidic residues; that stretch reads AEGEGKEDQSEDKS. Residues 135–154 are compositionally biased toward polar residues; sequence ITTVPSSTFPAPSKPSATSA. 4 positions are modified to phosphoserine: Ser-140, Ser-141, Ser-164, and Ser-186. The LD motif 3 motif lies at 157–168; the sequence is ELDRLMASLSDF. Residues 171–204 are disordered; that stretch reads QNHLPASGPPQPPAVSPTREGCPSPPGQTNKGSL. Thr-188 carries the post-translational modification Phosphothreonine. A Phosphoserine modification is found at Ser-194. The LD motif 4 signature appears at 203–215; that stretch reads SLDTMLGLLQSDL. LIM zinc-binding domains are found at residues 226–285, 286–343, 344–403, and 404–461; these read GLCG…RFSP, RCGF…QLFA, PRCQ…QRGS, and LCAT…KLFG. At Ser-403 the chain carries Phosphoserine. Position 407 is a phosphothreonine (Thr-407).

This sequence belongs to the paxillin family. Homooligomer. Interacts with PPARG. Interacts with TRAF4. Interacts with CRIP2. Interacts with HSPB1. Interacts with ILK. Interacts with LIMS1 and LIMS2. Interacts with NCK2. Interacts with NUDT16L1. Interacts with PAK. Interacts with PTPN12. Interacts with TCF3. Interacts with TCF7L2. Interacts with VCL. Interacts (via LD motif 3) with GIT1. Also interacts with GIT2. Forms a complex with ARHGEF7. Interacts with AR/androgen receptor in a ligand-dependent manner. Interacts with CSK. Interacts with PTK2/FAK1 and PTK2B/PYK2. Interacts with SLC6A3 and SLC6A4. Interacts with NR3C1. Interacts with SMAD3. Interacts with MAPK15. Interacts with SRC. Interacts with LYN. Interacts with talin. Interacts (via LIM zinc-binding domain 2) with CBLC (via RING-type zinc finger); the interaction is direct and enhances CBLC E3 ubiquitin-protein ligase activity. Interacts with PARVA. Interacts with PXN. Phosphorylated by gonadotropin-releasing hormone-activated SRC. In terms of tissue distribution, strongly expressed in large intestine, lung, spleen, testis, uterus and to a lower extent in brain, kidney and liver (at protein level). In brain, expressed by neuronal and non neuronal cells (at protein level).

It localises to the cell junction. Its subcellular location is the focal adhesion. It is found in the nucleus matrix. The protein resides in the cytoplasm. The protein localises to the cytoskeleton. In terms of biological role, functions as a molecular adapter coordinating multiple protein-protein interactions at the focal adhesion complex and in the nucleus. Links various intracellular signaling modules to plasma membrane receptors and regulates the Wnt and TGFB signaling pathways. May also regulate SLC6A3 and SLC6A4 targeting to the plasma membrane hence regulating their activity. In the nucleus, functions as a nuclear receptor coactivator regulating glucocorticoid, androgen, mineralocorticoid and progesterone receptor transcriptional activity. May play a role in the processes of cell growth, proliferation, migration, differentiation and senescence. May have a zinc-dependent DNA-binding activity. This is Transforming growth factor beta-1-induced transcript 1 protein (Tgfb1i1) from Rattus norvegicus (Rat).